The chain runs to 370 residues: tRNA-specific 2-thiouridylase MnmA (370 aa).

Residues Ala10–Ser17 and Met36 contribute to the ATP site. Cys111 serves as the catalytic Nucleophile. Cys111 and Cys209 are disulfide-bonded. Gly135 contributes to the ATP binding site. Residues Lys159 to Gln161 form an interaction with tRNA region. The active-site Cysteine persulfide intermediate is Cys209.

The protein belongs to the MnmA/TRMU family.

The protein resides in the cytoplasm. It catalyses the reaction S-sulfanyl-L-cysteinyl-[protein] + uridine(34) in tRNA + AH2 + ATP = 2-thiouridine(34) in tRNA + L-cysteinyl-[protein] + A + AMP + diphosphate + H(+). Its function is as follows. Catalyzes the 2-thiolation of uridine at the wobble position (U34) of tRNA, leading to the formation of s(2)U34. The sequence is that of tRNA-specific 2-thiouridylase MnmA from Koribacter versatilis (strain Ellin345).